A 427-amino-acid polypeptide reads, in one-letter code: MLDINLLRNDIEAVAARLAGRGYTLDTAAFNQLESERKSLQSRMQELQAKRNATSKQIGIAKGKGEDVSAILAEVATLGDELKAAEQAFDGVQGQLDAWLMSIPNLPHESVPVGKDENDNVEVRRVGVPRQFDFEVKDHVDVGAPLGLDFDTGAKLSGARFTVLKGDIARLHRAIAQFMLNTHTGSHGYQEHYTPYIVNDTALLGTGQLPKFADDMFKVTRGGDESAVPQYLISTSEVTLTNTVADTILQESELPKKMTAHSPCFRSEAGSYGRDTRGMIRQHQFDKVEMVRVEKPEHSYAALEEMVGHAENILKALELPYRVITLCTGDMGFGSAKTYDLEVWLPAQNTYREISSCSNCEAFQARRMKARYKDENGKNQLVHTLNGSGLAVGRTLVAILENYQNADGSVTVPTVLRPFMGKDRIGG.

235–237 is a binding site for L-serine; sequence TSE. 266–268 contributes to the ATP binding site; that stretch reads RSE. E289 provides a ligand contact to L-serine. Residue 353–356 participates in ATP binding; sequence EISS. S388 provides a ligand contact to L-serine.

The protein belongs to the class-II aminoacyl-tRNA synthetase family. Type-1 seryl-tRNA synthetase subfamily. Homodimer. The tRNA molecule binds across the dimer.

Its subcellular location is the cytoplasm. It catalyses the reaction tRNA(Ser) + L-serine + ATP = L-seryl-tRNA(Ser) + AMP + diphosphate + H(+). The enzyme catalyses tRNA(Sec) + L-serine + ATP = L-seryl-tRNA(Sec) + AMP + diphosphate + H(+). Its pathway is aminoacyl-tRNA biosynthesis; selenocysteinyl-tRNA(Sec) biosynthesis; L-seryl-tRNA(Sec) from L-serine and tRNA(Sec): step 1/1. In terms of biological role, catalyzes the attachment of serine to tRNA(Ser). Is also able to aminoacylate tRNA(Sec) with serine, to form the misacylated tRNA L-seryl-tRNA(Sec), which will be further converted into selenocysteinyl-tRNA(Sec). This is Serine--tRNA ligase from Chromobacterium violaceum (strain ATCC 12472 / DSM 30191 / JCM 1249 / CCUG 213 / NBRC 12614 / NCIMB 9131 / NCTC 9757 / MK).